The sequence spans 356 residues: Tyrosine recombinase XerS (356 aa).

The Core-binding (CB) domain maps to 16–121; that stretch reads IMPWYVLDYY…ALSSLYKYLT (106 aa). A Tyr recombinase domain is found at 169–354; sequence AFLDYVDKEY…VNDEQKNALD (186 aa). Active-site residues include R210, K234, H306, R309, and H332. Y341 functions as the O-(3'-phospho-DNA)-tyrosine intermediate in the catalytic mechanism.

Belongs to the 'phage' integrase family. XerS subfamily.

It is found in the cytoplasm. With respect to regulation, ftsK is required for recombination. In terms of biological role, site-specific tyrosine recombinase, which acts by catalyzing the cutting and rejoining of the recombining DNA molecules. Essential to convert dimers of the bacterial chromosome into monomers to permit their segregation at cell division. This is Tyrosine recombinase XerS from Streptococcus equi subsp. zooepidemicus (strain MGCS10565).